The primary structure comprises 346 residues: UPF0283 membrane protein VIBHAR_01918 (346 aa).

Over residues 1-17 (MSELKQKQVFKEKVMHS) the composition is skewed to basic and acidic residues. Residues 1-28 (MSELKQKQVFKEKVMHSEEEDVSPELNT) form a disordered region. The next 2 helical transmembrane spans lie at 73–93 (LFAT…ITAI) and 98–118 (WLAL…LGAL).

This sequence belongs to the UPF0283 family.

Its subcellular location is the cell inner membrane. The chain is UPF0283 membrane protein VIBHAR_01918 from Vibrio campbellii (strain ATCC BAA-1116).